Consider the following 301-residue polypeptide: Lipoyl synthase (301 aa).

C53, C58, C64, C79, C83, C86, and S290 together coordinate [4Fe-4S] cluster. One can recognise a Radical SAM core domain in the interval 65–279 (WSRKTATYML…RIYGKSIGFK (215 aa)).

The protein belongs to the radical SAM superfamily. Lipoyl synthase family. Requires [4Fe-4S] cluster as cofactor.

It localises to the cytoplasm. It carries out the reaction [[Fe-S] cluster scaffold protein carrying a second [4Fe-4S](2+) cluster] + N(6)-octanoyl-L-lysyl-[protein] + 2 oxidized [2Fe-2S]-[ferredoxin] + 2 S-adenosyl-L-methionine + 4 H(+) = [[Fe-S] cluster scaffold protein] + N(6)-[(R)-dihydrolipoyl]-L-lysyl-[protein] + 4 Fe(3+) + 2 hydrogen sulfide + 2 5'-deoxyadenosine + 2 L-methionine + 2 reduced [2Fe-2S]-[ferredoxin]. The protein operates within protein modification; protein lipoylation via endogenous pathway; protein N(6)-(lipoyl)lysine from octanoyl-[acyl-carrier-protein]: step 2/2. In terms of biological role, catalyzes the radical-mediated insertion of two sulfur atoms into the C-6 and C-8 positions of the octanoyl moiety bound to the lipoyl domains of lipoate-dependent enzymes, thereby converting the octanoylated domains into lipoylated derivatives. The chain is Lipoyl synthase from Leptospira interrogans serogroup Icterohaemorrhagiae serovar copenhageni (strain Fiocruz L1-130).